A 223-amino-acid polypeptide reads, in one-letter code: Deoxyribose-phosphate aldolase (223 aa).

The active-site Proton donor/acceptor is aspartate 89. Residue lysine 152 is the Schiff-base intermediate with acetaldehyde of the active site. Lysine 181 acts as the Proton donor/acceptor in catalysis.

Belongs to the DeoC/FbaB aldolase family. DeoC type 1 subfamily.

The protein resides in the cytoplasm. The catalysed reaction is 2-deoxy-D-ribose 5-phosphate = D-glyceraldehyde 3-phosphate + acetaldehyde. It participates in carbohydrate degradation; 2-deoxy-D-ribose 1-phosphate degradation; D-glyceraldehyde 3-phosphate and acetaldehyde from 2-deoxy-alpha-D-ribose 1-phosphate: step 2/2. Its function is as follows. Catalyzes a reversible aldol reaction between acetaldehyde and D-glyceraldehyde 3-phosphate to generate 2-deoxy-D-ribose 5-phosphate. This Bacillus cereus (strain Q1) protein is Deoxyribose-phosphate aldolase.